The chain runs to 429 residues: 3-phosphoshikimate 1-carboxyvinyltransferase (429 aa).

Residues lysine 11, serine 12, and arginine 16 each coordinate 3-phosphoshikimate. Lysine 11 contacts phosphoenolpyruvate. Phosphoenolpyruvate contacts are provided by glycine 82 and arginine 110. Positions 155, 157, 302, and 329 each coordinate 3-phosphoshikimate. A phosphoenolpyruvate-binding site is contributed by glutamine 157. Aspartate 302 functions as the Proton acceptor in the catalytic mechanism. The phosphoenolpyruvate site is built by arginine 333 and arginine 385.

It belongs to the EPSP synthase family. Monomer.

It is found in the cytoplasm. It catalyses the reaction 3-phosphoshikimate + phosphoenolpyruvate = 5-O-(1-carboxyvinyl)-3-phosphoshikimate + phosphate. It participates in metabolic intermediate biosynthesis; chorismate biosynthesis; chorismate from D-erythrose 4-phosphate and phosphoenolpyruvate: step 6/7. Its function is as follows. Catalyzes the transfer of the enolpyruvyl moiety of phosphoenolpyruvate (PEP) to the 5-hydroxyl of shikimate-3-phosphate (S3P) to produce enolpyruvyl shikimate-3-phosphate and inorganic phosphate. The sequence is that of 3-phosphoshikimate 1-carboxyvinyltransferase from Helicobacter pylori (strain G27).